The chain runs to 123 residues: Fluoride-specific ion channel FluC (123 aa).

Helical transmembrane passes span 1–21 (MQWL…GWLA), 32–52 (LGTL…LVWF), 66–86 (FVIT…AEVF), and 94–114 (LLAA…ATAL). Positions 73 and 76 each coordinate Na(+).

Belongs to the fluoride channel Fluc/FEX (TC 1.A.43) family.

Its subcellular location is the cell inner membrane. The catalysed reaction is fluoride(in) = fluoride(out). Na(+) is not transported, but it plays an essential structural role and its presence is essential for fluoride channel function. Functionally, fluoride-specific ion channel. Important for reducing fluoride concentration in the cell, thus reducing its toxicity. This is Fluoride-specific ion channel FluC from Psychrobacter arcticus (strain DSM 17307 / VKM B-2377 / 273-4).